The primary structure comprises 215 residues: Pentapeptide repeat protein QnrB4 (215 aa).

2 Pentapeptide repeat domains span residues 25-104 and 117-191; these read TFFN…SFMN and ITNT…RGVD.

Belongs to the pentapeptide repeat protein family.

Probably plays a role in resistance to quinolone antibiotics. Only inhibits ATP-dependent DNA supercoiling by E.coli gyrase at high concentration (30 uM). Protects E.coli gyrase supercoiling activity from inhibition by fluoroquinolones (ciprofloxacin) at 0.1 uM, does not protect M.tuberculosis gyrase activity. In Escherichia coli, this protein is Pentapeptide repeat protein QnrB4.